The following is a 382-amino-acid chain: MKITRLTTYRLPPRWMFLKIETDEGVAGWGEPVIEGRARTVEAAVHELADYLVGQDPRRINDLWQTLYRGGFYRGGPILMSAIAGIDQALWDIKGKVLGVPVYELLGGLVRDRMRTYSWVGGDRPADVIAGMKALQAGGFDHFKLNGCEEMGIIDSARAVDAAVARVAEIRAAFGNTVEFGLDFHGRVSAPMAKVLIRALEPYRPLFIEEPVLAEQAESYARLAAQTHLPIAAGERMFSRFEFKRVLEAGGLAILQPDLSHAGGITECLKIAGMAEAYDVALAPHCPLGPIALAACLHIDFVSWNATLQEQSMGIHYNQGAELLDYVRNKADFALEGGYIRPPRLPGLGVDIDEALVIERSRSAPDWRNPVWRHADGSVAEW.

Position 183 (Asp-183) interacts with Mg(2+). His-185 serves as the catalytic Proton donor. Residues Glu-209 and Glu-235 each coordinate Mg(2+). The Proton acceptor role is filled by His-285.

Belongs to the mandelate racemase/muconate lactonizing enzyme family. GalD subfamily. The cofactor is Mg(2+).

It catalyses the reaction D-galactonate = 2-dehydro-3-deoxy-D-galactonate + H2O. Its pathway is carbohydrate acid metabolism; D-galactonate degradation; D-glyceraldehyde 3-phosphate and pyruvate from D-galactonate: step 1/3. In terms of biological role, catalyzes the dehydration of D-galactonate to 2-keto-3-deoxy-D-galactonate. This is D-galactonate dehydratase from Ralstonia nicotianae (strain ATCC BAA-1114 / GMI1000) (Ralstonia solanacearum).